The following is a 323-amino-acid chain: Cytochrome c biogenesis protein CcsA (323 aa).

Transmembrane regions (helical) follow at residues 17 to 37 (VVSI…IVGF), 44 to 64 (GMII…FFSG), 68 to 88 (FSDL…FYMV), 98 to 118 (LSTI…SGLL), 143 to 163 (MILG…ILVI), 229 to 249 (IISL…VWAN), 262 to 279 (ETWA…LHSR), and 291 to 311 (IVAS…NLLG).

The protein belongs to the CcmF/CycK/Ccl1/NrfE/CcsA family. As to quaternary structure, may interact with Ccs1.

The protein localises to the plastid. It is found in the chloroplast thylakoid membrane. Functionally, required during biogenesis of c-type cytochromes (cytochrome c6 and cytochrome f) at the step of heme attachment. The sequence is that of Cytochrome c biogenesis protein CcsA from Lotus japonicus (Lotus corniculatus var. japonicus).